The chain runs to 479 residues: Adenylate kinase 8 (479 aa).

Adenylate kinase regions lie at residues 58–258 (PRIV…TYVQ) and 269–471 (PRVL…SGII). 67–72 (ASGKTT) contributes to the ATP binding site. The segment at 87-113 (TLENLILNEFSYTATEARRLYLQRKTV) is NMP 1. AMP-binding positions include 140-143 (GIPE), glutamine 147, and arginine 203. The interval 177–206 (GKRIDPQTGEIYHTTFDWPPESEIQNRLMV) is LID 1. An ATP-binding site is contributed by 278-283 (GSGKSL). The NMP 2 stretch occupies residues 298–327 (CCGQLLKEAVADRTTFGELIQPFFEKEMAV). Residues 325 to 327 (MAV), 354 to 357 (GVPR), and glutamine 361 contribute to the AMP site. An LID 2 region spans residues 391-424 (LRRIDPVTGERYHLMYKPPPTMEIQARLLQNPKD). Arginine 392 contacts ATP.

It belongs to the adenylate kinase family. In terms of assembly, interacts with CFAP45 and CFAP52; CFAP45 and AK8 dimerization may create a cavity at the interface of the dimer that can accommodate AMP. Expressed in respiratory cells (at protein level).

It is found in the cytoplasm. The protein localises to the cytosol. It localises to the cytoskeleton. The protein resides in the cilium axoneme. The catalysed reaction is AMP + ATP = 2 ADP. The enzyme catalyses a 2'-deoxyribonucleoside 5'-diphosphate + ATP = a 2'-deoxyribonucleoside 5'-triphosphate + ADP. It catalyses the reaction a ribonucleoside 5'-diphosphate + ATP = a ribonucleoside 5'-triphosphate + ADP. Functionally, nucleoside monophosphate (NMP) kinase that catalyzes the reversible transfer of the terminal phosphate group between nucleoside triphosphates and monophosphates. Has highest activity toward AMP, and weaker activity toward dAMP, CMP and dCMP. Also displays broad nucleoside diphosphate kinase activity. In Homo sapiens (Human), this protein is Adenylate kinase 8 (AK8).